An 804-amino-acid chain; its full sequence is Leucine--tRNA ligase (804 aa).

A 'HIGH' region motif is present at residues 39–50 (PFPSGKGLHVGH). The 'KMSKS' region signature appears at 573–577 (KMSKS). Residue lysine 576 participates in ATP binding.

This sequence belongs to the class-I aminoacyl-tRNA synthetase family.

It localises to the cytoplasm. The enzyme catalyses tRNA(Leu) + L-leucine + ATP = L-leucyl-tRNA(Leu) + AMP + diphosphate. In Lactobacillus johnsonii (strain CNCM I-12250 / La1 / NCC 533), this protein is Leucine--tRNA ligase.